The sequence spans 333 residues: L-lactate dehydrogenase B chain (333 aa).

NAD(+) contacts are provided by residues 29 to 57 (GQVG…WEDK) and Arg-99. Residues Arg-106, Asn-138, and Arg-169 each contribute to the substrate site. Asn-138 is an NAD(+) binding site. His-193 acts as the Proton acceptor in catalysis. Thr-248 contributes to the substrate binding site.

The protein belongs to the LDH/MDH superfamily. LDH family. Homotetramer.

Its subcellular location is the cytoplasm. It carries out the reaction (S)-lactate + NAD(+) = pyruvate + NADH + H(+). Its pathway is fermentation; pyruvate fermentation to lactate; (S)-lactate from pyruvate: step 1/1. Its function is as follows. Interconverts simultaneously and stereospecifically pyruvate and lactate with concomitant interconversion of NADH and NAD(+). This Alligator mississippiensis (American alligator) protein is L-lactate dehydrogenase B chain (LDHB).